Here is a 739-residue protein sequence, read N- to C-terminus: MTEAEAAQELARLAGLLAQANLAYHTLDAPEISDADYDALKQRNAEIEARFPHLKRPDSPSEQVGARPGEGFSKVSHAVRMMSLGNAFDDADVADFDRSIRKYLGLDVETALAYTAEPKIDGLSLSLRYEQGVLVQAATRGDGEVGENVTANARTIADIPARIEGAPEVLEVRGEVYMSHADFAALNTRQEAEGGKLFANPRNAAAGSLRQLDAAITRARPLRFFAYSWGELSEPLAETQMQAIERLAGLGFQTNPLTRRCADLDAMIAHYRDIEAQRATLGYDIDGVVYKLDDLGLQARLGFRSTTPRWAIAHKFPAELAWTRLEAIDIQVGRTGALSPVARLTPVTVGGVVVSNATLHNEDYIAGRDSRGQEIRDGKDIRVGDWVQVYRAGDVIPKIADVDLNKRPEGANPFEFPEQCPECGSPAIREEGDAVRRCTGGVICPAQAVEKLKHFVSRAAFDIEGLGAKQVEQFHADGWIREPADIFELRSRYGEGLQQLKNREGWGEKSATNLFQAIDDKRRIPLARLIFALGIRHVGEVGAKDLSLHYRDWDAMAAALDTARLAALAHRAADTAEEQERQQAQAEGRRARISDTRAAVIAAQEVPPEAAAAWADLIGVDGIGATLGLSLSDAFANGDERAAFDRLSAHLTVIPPDAPARDSPVAGKTVVFTGSLEKMTRAEAKARAEALGAKVAGSVSKKTDLLVAGPGAGSKLKTAESLGIETLDEDGWLKLIEGL.

34–38 (DADYD) contacts NAD(+). Residues 49 to 59 (ARFPHLKRPDS) show a composition bias toward basic and acidic residues. The segment at 49–70 (ARFPHLKRPDSPSEQVGARPGE) is disordered. Residues 83–84 (SL) and E117 contribute to the NAD(+) site. Residue K119 is the N6-AMP-lysine intermediate of the active site. Residues R140, E175, K291, and K315 each contribute to the NAD(+) site. Positions 420, 423, 438, and 444 each coordinate Zn(2+). The 80-residue stretch at 660 to 739 (ARDSPVAGKT…DGWLKLIEGL (80 aa)) folds into the BRCT domain.

It belongs to the NAD-dependent DNA ligase family. LigA subfamily. Mg(2+) serves as cofactor. It depends on Mn(2+) as a cofactor.

The catalysed reaction is NAD(+) + (deoxyribonucleotide)n-3'-hydroxyl + 5'-phospho-(deoxyribonucleotide)m = (deoxyribonucleotide)n+m + AMP + beta-nicotinamide D-nucleotide.. Its function is as follows. DNA ligase that catalyzes the formation of phosphodiester linkages between 5'-phosphoryl and 3'-hydroxyl groups in double-stranded DNA using NAD as a coenzyme and as the energy source for the reaction. It is essential for DNA replication and repair of damaged DNA. The sequence is that of DNA ligase from Ruegeria pomeroyi (strain ATCC 700808 / DSM 15171 / DSS-3) (Silicibacter pomeroyi).